We begin with the raw amino-acid sequence, 262 residues long: Acyl-[acyl-carrier-protein]--UDP-N-acetylglucosamine O-acyltransferase (262 aa).

It belongs to the transferase hexapeptide repeat family. LpxA subfamily. In terms of assembly, homotrimer.

The protein localises to the cytoplasm. It carries out the reaction a (3R)-hydroxyacyl-[ACP] + UDP-N-acetyl-alpha-D-glucosamine = a UDP-3-O-[(3R)-3-hydroxyacyl]-N-acetyl-alpha-D-glucosamine + holo-[ACP]. It participates in glycolipid biosynthesis; lipid IV(A) biosynthesis; lipid IV(A) from (3R)-3-hydroxytetradecanoyl-[acyl-carrier-protein] and UDP-N-acetyl-alpha-D-glucosamine: step 1/6. Its function is as follows. Involved in the biosynthesis of lipid A, a phosphorylated glycolipid that anchors the lipopolysaccharide to the outer membrane of the cell. This is Acyl-[acyl-carrier-protein]--UDP-N-acetylglucosamine O-acyltransferase from Sodalis glossinidius (strain morsitans).